A 343-amino-acid chain; its full sequence is Protein RecA (343 aa).

64 to 71 contributes to the ATP binding site; the sequence is GPESSGKT.

It belongs to the RecA family.

It is found in the cytoplasm. In terms of biological role, can catalyze the hydrolysis of ATP in the presence of single-stranded DNA, the ATP-dependent uptake of single-stranded DNA by duplex DNA, and the ATP-dependent hybridization of homologous single-stranded DNAs. It interacts with LexA causing its activation and leading to its autocatalytic cleavage. In Bacillus thuringiensis (strain Al Hakam), this protein is Protein RecA.